Consider the following 400-residue polypeptide: Enolase (400 aa).

Q153 is a binding site for (2R)-2-phosphoglycerate. The active-site Proton donor is E195. Mg(2+) contacts are provided by D231, E274, and D301. 4 residues coordinate (2R)-2-phosphoglycerate: K326, R355, S356, and K377. K326 acts as the Proton acceptor in catalysis.

The protein belongs to the enolase family. Requires Mg(2+) as cofactor.

The protein localises to the cytoplasm. The protein resides in the secreted. It localises to the cell surface. The catalysed reaction is (2R)-2-phosphoglycerate = phosphoenolpyruvate + H2O. Its pathway is carbohydrate degradation; glycolysis; pyruvate from D-glyceraldehyde 3-phosphate: step 4/5. Its function is as follows. Catalyzes the reversible conversion of 2-phosphoglycerate (2-PG) into phosphoenolpyruvate (PEP). It is essential for the degradation of carbohydrates via glycolysis. The protein is Enolase of Halorubrum lacusprofundi (strain ATCC 49239 / DSM 5036 / JCM 8891 / ACAM 34).